The primary structure comprises 398 residues: Succinate--CoA ligase [ADP-forming] subunit beta (398 aa).

Residues 9–254 (KALLGEFGVP…ETEEDAKEIE (246 aa)) form the ATP-grasp domain. ATP-binding positions include Lys-46, 53 to 55 (GRG), Glu-109, Ser-112, and Glu-117. The Mg(2+) site is built by Asn-209 and Asp-223. Substrate is bound by residues Asn-274 and 331 to 333 (GIM).

The protein belongs to the succinate/malate CoA ligase beta subunit family. In terms of assembly, heterotetramer of two alpha and two beta subunits. Mg(2+) is required as a cofactor.

It carries out the reaction succinate + ATP + CoA = succinyl-CoA + ADP + phosphate. It catalyses the reaction GTP + succinate + CoA = succinyl-CoA + GDP + phosphate. It participates in carbohydrate metabolism; tricarboxylic acid cycle; succinate from succinyl-CoA (ligase route): step 1/1. Functionally, succinyl-CoA synthetase functions in the citric acid cycle (TCA), coupling the hydrolysis of succinyl-CoA to the synthesis of either ATP or GTP and thus represents the only step of substrate-level phosphorylation in the TCA. The beta subunit provides nucleotide specificity of the enzyme and binds the substrate succinate, while the binding sites for coenzyme A and phosphate are found in the alpha subunit. The sequence is that of Succinate--CoA ligase [ADP-forming] subunit beta from Bradyrhizobium diazoefficiens (strain JCM 10833 / BCRC 13528 / IAM 13628 / NBRC 14792 / USDA 110).